The following is a 121-amino-acid chain: Type II secretion system protein I (121 aa).

Residues 1–6 (MNKQKG) constitute a propeptide, leader sequence. Position 7 is an N-methylmethionine (Met-7). Residues 7 to 27 (MTLLEVLVALAIFSLAGLTLL) traverse the membrane as a helical segment.

This sequence belongs to the GSP I family. In terms of assembly, type II secretion is composed of four main components: the outer membrane complex, the inner membrane complex, the cytoplasmic secretion ATPase and the periplasm-spanning pseudopilus. Interacts with core component PulG. Interacts with pseudopilins PulJ and PulK. Cleaved by prepilin peptidase. Post-translationally, methylated by prepilin peptidase at the amino group of the N-terminal methionine once the leader sequence is cleaved by prepilin peptidase.

It localises to the cell inner membrane. Its function is as follows. Component of the type II secretion system required for the energy-dependent secretion of extracellular factors such as proteases and toxins from the periplasm. Part of the pseudopilus tip complex that is critical for the recognition and binding of secretion substrates. The protein is Type II secretion system protein I (pulI) of Klebsiella michiganensis (strain ATCC 8724 / DSM 4798 / JCM 20051 / NBRC 3318 / NRRL B-199 / KCTC 1686 / BUCSAV 143 / CCM 1901).